Here is a 277-residue protein sequence, read N- to C-terminus: UBX domain-containing protein 10 (277 aa).

The tract at residues 1 to 102 (MAIEAPVNFA…APDEMPELLL (102 aa)) is disordered. Positions 16–31 (TVVSTAGDSSTWQPSS) are enriched in polar residues. A compositionally biased stretch (basic residues) spans 35-50 (HVIRPKSAKGRKRPNL). Over residues 60–77 (SPSALSSSPPPRSSGSPS) the composition is skewed to low complexity. S88 carries the phosphoserine modification. The 78-residue stretch at 191 to 268 (DEEPRLLLAV…GILHKSVLGI (78 aa)) folds into the UBX domain.

The protein belongs to the UBXN10 family. As to quaternary structure, interacts with CLUAP1; the interaction is direct and mediates interaction with the intraflagellar transport complex B (IFT-B). Interacts with VCP; the interaction is direct.

Its subcellular location is the cell projection. It is found in the cilium. VCP/p97-binding protein required for ciliogenesis. Acts as a tethering factor that facilitates recruitment of VCP/p97 to the intraflagellar transport complex B (IFT-B) in cilia. UBX domain-containing proteins act as tethering factors for VCP/p97 and may specify substrate specificity of VCP/p97. In Mus musculus (Mouse), this protein is UBX domain-containing protein 10.